Reading from the N-terminus, the 256-residue chain is MLNIGPFSFHSRLLLGTGKFPDFDVQQKAIDVSEAEILTFAVRRMDIFDAKQPNLLEKLDVKKYTLLPNTAGAKNAEEAVRIAKLAKASGLCDMIKVEVIGDDRTLLPDPVETLKASEMLLEEGFIVLPYTSDDVVLARKLQELGVHAIMPGASPIGSGLGIVNPLNLSFIIEQATVPVIVDAGIGSPADAAFAMELGADGVLLNTAVSGAKDPIKMAQAMKLSIEAGRLGFEAGRIARKRCATASSPLEGMSVVE.

Lys96 acts as the Schiff-base intermediate with DXP in catalysis. 1-deoxy-D-xylulose 5-phosphate-binding positions include Gly157, 183–184, and 205–206; these read AG and NT.

This sequence belongs to the ThiG family. Homotetramer. Forms heterodimers with either ThiH or ThiS.

The protein localises to the cytoplasm. It carries out the reaction [ThiS sulfur-carrier protein]-C-terminal-Gly-aminoethanethioate + 2-iminoacetate + 1-deoxy-D-xylulose 5-phosphate = [ThiS sulfur-carrier protein]-C-terminal Gly-Gly + 2-[(2R,5Z)-2-carboxy-4-methylthiazol-5(2H)-ylidene]ethyl phosphate + 2 H2O + H(+). It functions in the pathway cofactor biosynthesis; thiamine diphosphate biosynthesis. Its function is as follows. Catalyzes the rearrangement of 1-deoxy-D-xylulose 5-phosphate (DXP) to produce the thiazole phosphate moiety of thiamine. Sulfur is provided by the thiocarboxylate moiety of the carrier protein ThiS. In vitro, sulfur can be provided by H(2)S. The protein is Thiazole synthase of Bacillus cereus (strain G9842).